The sequence spans 132 residues: MDRKMLKSKIHRATVTGADLHYEGSITIDKDLMEAADIIPYEAVCIWDVDNGSRFETYAIEGERGSGVICINGAAARMVAPKDLVIIASFVNMNNEEALKHEPKLVFVDDQNRMLPARKEVAGQGTLKKVAW.

Catalysis depends on serine 25, which acts as the Schiff-base intermediate with substrate; via pyruvic acid. Pyruvic acid (Ser) is present on serine 25. Residue threonine 57 coordinates substrate. The Proton donor role is filled by tyrosine 58. Position 73–75 (73–75 (GAA)) interacts with substrate.

The protein belongs to the PanD family. In terms of assembly, heterooctamer of four alpha and four beta subunits. The cofactor is pyruvate. Post-translationally, is synthesized initially as an inactive proenzyme, which is activated by self-cleavage at a specific serine bond to produce a beta-subunit with a hydroxyl group at its C-terminus and an alpha-subunit with a pyruvoyl group at its N-terminus.

It is found in the cytoplasm. It catalyses the reaction L-aspartate + H(+) = beta-alanine + CO2. It participates in cofactor biosynthesis; (R)-pantothenate biosynthesis; beta-alanine from L-aspartate: step 1/1. Functionally, catalyzes the pyruvoyl-dependent decarboxylation of aspartate to produce beta-alanine. This Geotalea uraniireducens (strain Rf4) (Geobacter uraniireducens) protein is Aspartate 1-decarboxylase.